A 355-amino-acid chain; its full sequence is Protein RecA (355 aa).

72-79 (GPESSGKT) contributes to the ATP binding site.

Belongs to the RecA family.

It is found in the cytoplasm. Can catalyze the hydrolysis of ATP in the presence of single-stranded DNA, the ATP-dependent uptake of single-stranded DNA by duplex DNA, and the ATP-dependent hybridization of homologous single-stranded DNAs. It interacts with LexA causing its activation and leading to its autocatalytic cleavage. This is Protein RecA from Thermosynechococcus vestitus (strain NIES-2133 / IAM M-273 / BP-1).